Here is a 79-residue protein sequence, read N- to C-terminus: Sec-independent protein translocase protein TatA (79 aa).

A helical membrane pass occupies residues 1–21; it reads MHMPSGTQWLIILLIVVLLFG.

It belongs to the TatA/E family. The Tat system comprises two distinct complexes: a TatABC complex, containing multiple copies of TatA, TatB and TatC subunits, and a separate TatA complex, containing only TatA subunits. Substrates initially bind to the TatABC complex, which probably triggers association of the separate TatA complex to form the active translocon.

It localises to the cell inner membrane. Its function is as follows. Part of the twin-arginine translocation (Tat) system that transports large folded proteins containing a characteristic twin-arginine motif in their signal peptide across membranes. TatA could form the protein-conducting channel of the Tat system. In Campylobacter lari (strain RM2100 / D67 / ATCC BAA-1060), this protein is Sec-independent protein translocase protein TatA.